Consider the following 135-residue polypeptide: Ribosome-binding factor A (135 aa).

Belongs to the RbfA family. As to quaternary structure, monomer. Binds 30S ribosomal subunits, but not 50S ribosomal subunits or 70S ribosomes.

It is found in the cytoplasm. In terms of biological role, one of several proteins that assist in the late maturation steps of the functional core of the 30S ribosomal subunit. Associates with free 30S ribosomal subunits (but not with 30S subunits that are part of 70S ribosomes or polysomes). Required for efficient processing of 16S rRNA. May interact with the 5'-terminal helix region of 16S rRNA. The protein is Ribosome-binding factor A of Aliivibrio fischeri (strain MJ11) (Vibrio fischeri).